Reading from the N-terminus, the 837-residue chain is Protein translocase subunit SecA 1 (837 aa).

Residues Gln-85, 103–107 (GEGKT), and Asp-492 each bind ATP. Positions 791-837 (KGEAINPAEGKPEAKRQPIRKDQHIGRNDPCPCGSGKKYKNCHGKEA) are disordered. A compositionally biased stretch (basic and acidic residues) spans 800-817 (GKPEAKRQPIRKDQHIGR). Positions 821, 823, 832, and 833 each coordinate Zn(2+). Basic residues predominate over residues 827-837 (KKYKNCHGKEA).

Belongs to the SecA family. Monomer and homodimer. Part of the essential Sec protein translocation apparatus which comprises SecA, SecYEG and auxiliary proteins SecDF. Other proteins may also be involved. It depends on Zn(2+) as a cofactor.

It is found in the cell membrane. It localises to the cytoplasm. The catalysed reaction is ATP + H2O + cellular proteinSide 1 = ADP + phosphate + cellular proteinSide 2.. Part of the Sec protein translocase complex. Interacts with the SecYEG preprotein conducting channel. Has a central role in coupling the hydrolysis of ATP to the transfer of proteins into and across the cell membrane, serving as an ATP-driven molecular motor driving the stepwise translocation of polypeptide chains across the membrane. The polypeptide is Protein translocase subunit SecA 1 (Listeria monocytogenes serovar 1/2a (strain ATCC BAA-679 / EGD-e)).